We begin with the raw amino-acid sequence, 93 residues long: Transcription factor PRE3 (93 aa).

Residues 6-61 (SRSRQSSGTSRISEDQINDLIIKLQQLLPELRDSRRSDKVSAARVLQDTCNYIRNL) form the bHLH domain.

In terms of assembly, homodimer. Interacts with BHLH 147, BHLH148, BHLH149, BHLH150 and IBH1. Interacts with SIEL. In terms of tissue distribution, expressed in root and shoot meristems, and young siliques. Low levels detected in all aerial tissues.

The protein localises to the nucleus. It localises to the cytoplasm. In terms of biological role, atypical and probable non DNA-binding bHLH transcription factor required for MONOPTEROS-dependent root initiation in embryo. Promotes the correct definition of the hypophysis cell division plane. Transcriptionally controlled by MONOPTEROS. Moves from its site of synthesis in pro-embryos cells into the hypophysis. Regulates brassinosteroid (BR) signaling by sequestering negative BR signaling components. May function as positive regulator of gibberellin signaling. May play a role in the regulation of light signaling and possibly auxin signaling. This chain is Transcription factor PRE3 (PRE3), found in Arabidopsis thaliana (Mouse-ear cress).